The chain runs to 218 residues: Ras-related protein Rab-11B (218 aa).

Position 2 is an N-acetylglycine (glycine 2). At arginine 4 the chain carries Citrulline. GTP-binding residues include serine 20, glycine 21, glycine 23, lysine 24, serine 25, asparagine 26, asparagine 37, leucine 38, serine 40, serine 42, and threonine 43. Serine 25 is a binding site for Mg(2+). The Switch 1 motif lies at phenylalanine 36–glutamate 47. Mg(2+)-binding residues include threonine 43 and aspartate 66. A Switch 2 motif is present at residues threonine 67 to glycine 86. 6 residues coordinate GTP: glycine 69, asparagine 124, lysine 125, aspartate 127, alanine 155, and leucine 156. Residues arginine 184–leucine 218 are disordered. S-geranylgeranyl cysteine attachment occurs at residues cysteine 214 and cysteine 215. Cysteine 215 carries the post-translational modification Cysteine methyl ester. Positions glutamine 216–leucine 218 are cleaved as a propeptide — removed in mature form.

The protein belongs to the small GTPase superfamily. Rab family. Interacts with KCNMA1. Interacts with RAB11FIP1, RAB11FIP2, RAB11FIP3 and RAB11FIP4. May interact with TBC1D14. Interacts with ATP6V1E1. Interacts with PI4KB. Interacts (GDP-bound form) with ZFYVE27. Interacts (GDP-bound form) with KIF5A in a ZFYVE27-dependent manner. Interacts with RELCH. Interacts (in GTP-bound form) with TBC1D8B (via domain Rab-GAP TBC). Forms a complex containing RAB11B, ASAP1, Rabin8/RAB3IP, RAP11FIP3 and ARF4. Interacts with WDR44. Requires Mg(2+) as cofactor. Citrullinated by PADI4. In terms of tissue distribution, abundantly expressed in brain, heart and testis. Also detected in kidney and pancreatic islets.

The protein resides in the recycling endosome membrane. It is found in the cytoplasmic vesicle. Its subcellular location is the secretory vesicle. It localises to the synaptic vesicle membrane. The protein localises to the phagosome membrane. It catalyses the reaction GTP + H2O = GDP + phosphate + H(+). Regulated by guanine nucleotide exchange factors (GEFs) which promote the exchange of bound GDP for free GTP. Regulated by GTPase activating proteins (GAPs) which increase the GTP hydrolysis activity. Inhibited by GDP dissociation inhibitors (GDIs) which prevent Rab-GDP dissociation. The small GTPases Rab are key regulators of intracellular membrane trafficking, from the formation of transport vesicles to their fusion with membranes. Rabs cycle between an inactive GDP-bound form and an active GTP-bound form that is able to recruit to membranes different set of downstream effectors directly responsible for vesicle formation, movement, tethering and fusion. The small Rab GTPase RAB11B plays a role in endocytic recycling, regulating apical recycling of several transmembrane proteins including cystic fibrosis transmembrane conductance regulator/CFTR, epithelial sodium channel/ENaC, potassium voltage-gated channel, and voltage-dependent L-type calcium channel. May also regulate constitutive and regulated secretion, like insulin granule exocytosis. Required for melanosome transport and release from melanocytes. Also regulates V-ATPase intracellular transport in response to extracellular acidosis. Promotes Rabin8/RAB3IP preciliary vesicular trafficking to mother centriole by forming a ciliary targeting complex containing Rab11, ASAP1, Rabin8/RAB3IP, RAB11FIP3 and ARF4, thereby regulating ciliogenesis initiation. On the contrary, upon LPAR1 receptor signaling pathway activation, interaction with phosphorylated WDR44 prevents Rab11-RAB3IP-RAB11FIP3 complex formation and cilia growth. This Mus musculus (Mouse) protein is Ras-related protein Rab-11B.